The primary structure comprises 214 residues: UBX domain-containing protein 10 (214 aa).

Residues 1-13 (MHVTRPKSSKGRS) are compositionally biased toward basic residues. Positions 1 to 79 (MHVTRPKSSK…AYDRPPEEPV (79 aa)) are disordered. Residues 16–25 (MITNSSMIYT) are compositionally biased toward polar residues. Residues 49–60 (SLRSRAILRRSS) show a composition bias toward low complexity. Residues 127–204 (PEESDLLLAI…GVLNKSVLCI (78 aa)) form the UBX domain.

This sequence belongs to the UBXN10 family.

The protein resides in the cell projection. The protein localises to the cilium. In terms of biological role, required for ciliogenesis. Acts as a tethering factor that facilitates recruitment of vcp/p97 to the intraflagellar transport complex B (IFT-B) in cilia. This is UBX domain-containing protein 10 from Danio rerio (Zebrafish).